The sequence spans 365 residues: UPF0283 membrane protein Avi_2471 (365 aa).

Residues 1 to 10 (MSKAPEDQRP) are compositionally biased toward basic and acidic residues. The disordered stretch occupies residues 1–47 (MSKAPEDQRPMPRRPAAFSLEEPSSSPARPPFAEAQEPQRRAPKSFD). A run of 2 helical transmembrane segments spans residues 83–103 (FGKL…GLWI) and 117–137 (LGYT…VVVI).

This sequence belongs to the UPF0283 family.

It is found in the cell inner membrane. The protein is UPF0283 membrane protein Avi_2471 of Allorhizobium ampelinum (strain ATCC BAA-846 / DSM 112012 / S4) (Agrobacterium vitis (strain S4)).